Reading from the N-terminus, the 440-residue chain is Cytochrome P450 monooygenase 1 (440 aa).

Residue Cys-381 coordinates heme.

It belongs to the cytochrome P450 family. Heme is required as a cofactor.

It participates in plant hormone biosynthesis; gibberellin biosynthesis. Its function is as follows. GA14 synthase; part of the gene cluster that mediates the biosynthesis of gibberellins (GAs), diterpenoids that may provide a selective advantage during infection of the preferred host plant, rice. Gibberellins (GAs) are diterpenoids and are synthesized via the mevalonate pathway. Biosynthesis of the major metabolite GA3 (gibberellic acid) from geranylgeranyl diphosphate (GGPP) requires 13 steps. The GGPP produced by the geranylgeranyl diphosphate synthase GGS2 is converted to ent-kaurene via ent-copalyldiphosphate in a two-step cyclization reaction performed by the bifunctional ent-copalyl diphosphate synthase/ent-kaurene synthase enzyme (CPS/KS). Ent-Kaurene is metabolized to GAs by a series of oxidation reactions catalyzed by cytochrome P450 monooxygenases. Cytochrome P450 monooxygenase P450-4 is an ent-kaurene oxidase that catalyzes the three oxidation steps between ent-kaurene and ent-kaurenoic acid. The highly multifunctional cytochrome P450 monooxygenase P450-1 then catalyzes four steps involving oxidation at two carbon atoms, in the main pathway from ent-kaurenoic acid to GA14 via GA12-aldehyde as well as producing kaurenolides and fujenoic acids as by-products. The cytochrome P450 monooxygenase P450-2 then converts GA14 to GA4 by removal of C-20. GA4 is further converted to GA7 by the GA4 desaturase DES via 1,2-desaturation before cytochrome P450 monooxygenase P450-3, a 13-hydroxylase, hydroxylates GA7 to GA3, the final product of the GA-biosynthetic pathway. In Gibberella fujikuroi (strain CBS 195.34 / IMI 58289 / NRRL A-6831) (Bakanae and foot rot disease fungus), this protein is Cytochrome P450 monooygenase 1.